The following is a 373-amino-acid chain: Exonuclease V (373 aa).

Cysteine 92 is a binding site for [4Fe-4S] cluster. 2 residues coordinate Mg(2+): aspartate 182 and glutamate 196. [4Fe-4S] cluster is bound by residues cysteine 343, cysteine 346, and cysteine 352.

It belongs to the EXO5 family. In terms of assembly, monomer; monomeric form has weak exonuclease activity. Homodimer; homodimeric form is unsure but has much higher exonuclease activity, suggesting that it could homodimerize upon DNA-binding. Interacts with the replication protein A (RPA) complex. The cofactor is [4Fe-4S] cluster. Mg(2+) serves as cofactor.

It localises to the nucleus. The protein resides in the cytoplasm. It is found in the cytosol. Functionally, single-stranded DNA (ssDNA) bidirectional exonuclease involved in DNA repair. Probably involved in DNA repair following ultraviolet (UV) irradiation and interstrand cross-links (ICLs) damage. Has both 5'-3' and 3'-5' exonuclease activities with a strong preference for 5'-ends. Acts as a sliding exonuclease that loads at ssDNA ends and then slides along the ssDNA prior to cutting; however the sliding and the 3'-5' exonuclease activities are abolished upon binding to the replication protein A (RPA) complex that enforces 5'-directionality activity. The chain is Exonuclease V (EXO5) from Homo sapiens (Human).